The sequence spans 463 residues: A-type ATP synthase subunit B (463 aa).

This sequence belongs to the ATPase alpha/beta chains family. In terms of assembly, has multiple subunits with at least A(3), B(3), C, D, E, F, H, I and proteolipid K(x).

The protein resides in the cell membrane. Its function is as follows. Component of the A-type ATP synthase that produces ATP from ADP in the presence of a proton gradient across the membrane. The B chain is a regulatory subunit. This Methanothermobacter thermautotrophicus (strain ATCC 29096 / DSM 1053 / JCM 10044 / NBRC 100330 / Delta H) (Methanobacterium thermoautotrophicum) protein is A-type ATP synthase subunit B.